Reading from the N-terminus, the 245-residue chain is 14-3-3 protein zeta/delta (245 aa).

N-acetylmethionine is present on Met-1. At Lys-3 the chain carries N6-acetyllysine. A Phosphoserine; by PKA modification is found at Ser-58. The residue at position 68 (Lys-68) is an N6-acetyllysine. Phosphoserine occurs at positions 184, 207, and 210. Thr-232 carries the post-translational modification Phosphothreonine; by CK1.

This sequence belongs to the 14-3-3 family. As to quaternary structure, homodimer. Heterodimerizes with YWHAE. Homo- and heterodimerization is inhibited by phosphorylation on Ser-58. Interacts with FOXO4, NOXA1, SSH1 and ARHGEF2. Interacts with CDK16 and with WEE1 (C-terminal). Interacts with MLF1 (phosphorylated form); the interaction retains it in the cytoplasm. Interacts with BSPRY. Interacts with Thr-phosphorylated ITGB2. Interacts with Pseudomonas aeruginosa exoS (unphosphorylated form). Interacts with BAX; the interaction occurs in the cytoplasm. Under stress conditions, MAPK8-mediated phosphorylation releases BAX to mitochondria. Interacts with phosphorylated RAF1; the interaction is inhibited when YWHAZ is phosphorylated on Thr-232. Interacts with TP53; the interaction enhances p53 transcriptional activity. The Ser-58 phosphorylated form inhibits this interaction and p53 transcriptional activity. Interacts with ABL1 (phosphorylated form); the interaction retains ABL1 in the cytoplasm. Interacts with PKA-phosphorylated AANAT; the interaction modulates AANAT enzymatic activity by increasing affinity for arylalkylamines and acetyl-CoA and protecting the enzyme from dephosphorylation and proteasomal degradation. It may also prevent thiol-dependent inactivation. Interacts with AKT1; the interaction phosphorylates YWHAZ and modulates dimerization. Interacts with GAB2. Interacts with SAMSN1. Interacts with BCL2L11 and TLK2. Interacts with the 'Thr-369' phosphorylated form of DAPK2. Interacts with PI4KB, TBC1D22A and TBC1D22B. Interacts with ZFP36L1 (via phosphorylated form); this interaction occurs in a p38 MAPK- and AKT-signaling pathways. Interacts with SLITRK1. Interacts with AK5, LDB1, MADD, PDE1A and SMARCB1. Interacts with ARHGEF7 and GIT1. Interacts with MEFV. Interacts with ADAM22 (via C-terminus). Post-translationally, the delta, brain-specific form differs from the zeta form in being phosphorylated. Phosphorylation on Ser-184 by MAPK8; promotes dissociation of BAX and translocation of BAX to mitochondria. Phosphorylation on Thr-232; inhibits binding of RAF1. Phosphorylated on Ser-58 by PKA and protein kinase C delta type catalytic subunit in a sphingosine-dependent fashion. Phosphorylation on Ser-58 by PKA; disrupts homodimerization and heterodimerization with YHAE and TP53.

The protein resides in the cytoplasm. It localises to the melanosome. In terms of biological role, adapter protein implicated in the regulation of a large spectrum of both general and specialized signaling pathways. Binds to a large number of partners, usually by recognition of a phosphoserine or phosphothreonine motif. Binding generally results in the modulation of the activity of the binding partner. Promotes cytosolic retention and inactivation of TFEB transcription factor by binding to phosphorylated TFEB. Induces ARHGEF7 activity on RAC1 as well as lamellipodia and membrane ruffle formation. In neurons, regulates spine maturation through the modulation of ARHGEF7 activity. This is 14-3-3 protein zeta/delta (Ywhaz) from Mus musculus (Mouse).